The following is a 167-amino-acid chain: Transcription initiation factor TFIID subunit 10 (167 aa).

2 disordered regions span residues 1–56 and 119–139; these read MASD…EESE and TTNI…NPKD. A compositionally biased stretch (acidic residues) spans 41 to 56; that stretch reads EQPDVEEVPLTTEESE. Residues 130 to 139 show a composition bias toward basic and acidic residues; that stretch reads SSKDKKNPKD.

The protein belongs to the TAF10 family. In terms of assembly, belongs to the TFIID complex which is composed of TATA binding protein (Tbp) and a number of TBP-associated factors (TAFs). Also a member of the histone acetylase (HAT) complex. In terms of tissue distribution, at embryonic stage 9, highest expression is detected within the ectoderm, ventral chord, and anterior foregut primordium. Later in development preferential expression is in the foregut, proventriculus, and central nervous system. Coexpressed with Taf10b in the lateral epidermis and anal plate.

The protein localises to the cytoplasm. It is found in the nucleus. TFIID is a multimeric protein complex that plays a central role in mediating promoter responses to various activators and repressors. This chain is Transcription initiation factor TFIID subunit 10, found in Drosophila melanogaster (Fruit fly).